Consider the following 620-residue polypeptide: Protein regulator of cytokinesis 1 (620 aa).

Residues 1–303 form a required for the interaction with KIF4A region; that stretch reads MRRSEVLAEE…IEAIRVELVQ (303 aa). The interval 1–341 is dimerization; it reads MRRSEVLAEE…QLHDAEIVRL (341 aa). Coiled-coil stretches lie at residues 96 to 133, 211 to 304, and 383 to 463; these read ILQLEKDLRTQVELMRKQKKERKQELKLLQEQDQELCE, SLEN…LVQY, and GNLL…TEML. A spectrin-fold region spans residues 342–466; sequence KNYYEVHKEL…QTETEMLYGS (125 aa). A compositionally biased stretch (basic and acidic residues) spans 446-459; it reads AKQERQLKNKKQTE. A disordered region spans residues 446-488; the sequence is AKQERQLKNKKQTETEMLYGSAPRTPSKRRGLAPNTPGKARKL. A unstructured, Arg/Lys rich region spans residues 467–620; that stretch reads APRTPSKRRG…GILNSTNIQS (154 aa). Threonine 470 and threonine 481 each carry phosphothreonine; by CDK1. A phosphoserine mark is found at serine 513, arginine 541, and serine 571. Residues 517 to 545 form a disordered region; sequence RLPPSGSKPVAASTCSGKKTPRTGRHGAN. Residue threonine 578 is modified to Phosphothreonine. Residues 600–620 form a disordered region; it reads LSKASKSDATSGILNSTNIQS. Over residues 606–620 the composition is skewed to polar residues; sequence SDATSGILNSTNIQS. Threonine 616 bears the Phosphothreonine; by PLK1 mark.

The protein belongs to the MAP65/ASE1 family. Homodimer. Interacts with the C-terminal Rho-GAP domain and the basic region of RACGAP1. The interaction with RACGAP1 inhibits its GAP activity towards CDC42 in vitro, which may be required for maintaining normal spindle morphology. Interacts (via N-terminus) with the C-terminus of CENPE (via C-terminus); the interaction occurs during late mitosis. Interacts (via N-terminus) with KIF4A (via C-terminus); the interaction is required for the progression of mitosis. Interacts (via N-terminus) with KIF23 (via C-terminus); the interaction occurs during late mitosis. Interacts with KIF14 and KIF20A. Interacts with PLK1. Interacts with KIF20B. Interacts with CCDC66. Phosphorylation by CDK1 in early mitosis holds PRC1 in an inactive monomeric state, during the metaphase to anaphase transition, PRC1 is dephosphorylated, promoting interaction with KIF4A, which then translocates PRC1 along mitotic spindles to the plus ends of antiparallel interdigitating microtubules. Dephosphorylation also promotes MT-bundling activity by allowing dimerization. Phosphorylation by CDK1 prevents PLK1-binding: upon degradation of CDK1 at anaphase and dephosphorylation, it is then phosphorylated by PLK1, leading to cytokinesis. Overexpressed in bladder cancer cells.

The protein localises to the nucleus. It localises to the cytoplasm. The protein resides in the cytoskeleton. Its subcellular location is the spindle pole. It is found in the midbody. The protein localises to the chromosome. In terms of biological role, key regulator of cytokinesis that cross-links antiparrallel microtubules at an average distance of 35 nM. Essential for controlling the spatiotemporal formation of the midzone and successful cytokinesis. Required for KIF14 localization to the central spindle and midbody. Required to recruit PLK1 to the spindle. Stimulates PLK1 phosphorylation of RACGAP1 to allow recruitment of ECT2 to the central spindle. Acts as an oncogene for promoting bladder cancer cells proliferation, apoptosis inhibition and carcinogenic progression. This is Protein regulator of cytokinesis 1 from Homo sapiens (Human).